A 325-amino-acid chain; its full sequence is Biotin synthase (325 aa).

In terms of domain architecture, Radical SAM core spans 52–281; the sequence is YQKDDVVLCS…AKPLLICGGR (230 aa). C70, C74, and C77 together coordinate [4Fe-4S] cluster. [2Fe-2S] cluster contacts are provided by S114, C146, and C206.

This sequence belongs to the radical SAM superfamily. Biotin synthase family. In terms of assembly, homodimer. [4Fe-4S] cluster is required as a cofactor. [2Fe-2S] cluster serves as cofactor.

It catalyses the reaction (4R,5S)-dethiobiotin + (sulfur carrier)-SH + 2 reduced [2Fe-2S]-[ferredoxin] + 2 S-adenosyl-L-methionine = (sulfur carrier)-H + biotin + 2 5'-deoxyadenosine + 2 L-methionine + 2 oxidized [2Fe-2S]-[ferredoxin]. It participates in cofactor biosynthesis; biotin biosynthesis; biotin from 7,8-diaminononanoate: step 2/2. Functionally, catalyzes the conversion of dethiobiotin (DTB) to biotin by the insertion of a sulfur atom into dethiobiotin via a radical-based mechanism. This is Biotin synthase from Syntrophus aciditrophicus (strain SB).